We begin with the raw amino-acid sequence, 49 residues long: Large ribosomal subunit protein bL33A (49 aa).

It belongs to the bacterial ribosomal protein bL33 family.

The sequence is that of Large ribosomal subunit protein bL33A from Streptococcus pneumoniae (strain Hungary19A-6).